We begin with the raw amino-acid sequence, 311 residues long: tRNA-cytidine(32) 2-sulfurtransferase (311 aa).

Residues 47-52 carry the PP-loop motif motif; it reads SGGKDS. 3 residues coordinate [4Fe-4S] cluster: Cys-122, Cys-125, and Cys-213.

The protein belongs to the TtcA family. In terms of assembly, homodimer. It depends on Mg(2+) as a cofactor. Requires [4Fe-4S] cluster as cofactor.

The protein localises to the cytoplasm. The enzyme catalyses cytidine(32) in tRNA + S-sulfanyl-L-cysteinyl-[cysteine desulfurase] + AH2 + ATP = 2-thiocytidine(32) in tRNA + L-cysteinyl-[cysteine desulfurase] + A + AMP + diphosphate + H(+). Its pathway is tRNA modification. Catalyzes the ATP-dependent 2-thiolation of cytidine in position 32 of tRNA, to form 2-thiocytidine (s(2)C32). The sulfur atoms are provided by the cysteine/cysteine desulfurase (IscS) system. This is tRNA-cytidine(32) 2-sulfurtransferase from Pectobacterium carotovorum subsp. carotovorum (strain PC1).